Reading from the N-terminus, the 119-residue chain is Large ribosomal subunit protein bL20 (119 aa).

It belongs to the bacterial ribosomal protein bL20 family.

In terms of biological role, binds directly to 23S ribosomal RNA and is necessary for the in vitro assembly process of the 50S ribosomal subunit. It is not involved in the protein synthesizing functions of that subunit. This Clostridium botulinum (strain Alaska E43 / Type E3) protein is Large ribosomal subunit protein bL20.